A 205-amino-acid polypeptide reads, in one-letter code: Large ribosomal subunit protein uL3 (205 aa).

The protein belongs to the universal ribosomal protein uL3 family. Part of the 50S ribosomal subunit. Forms a cluster with proteins L14 and L19.

Functionally, one of the primary rRNA binding proteins, it binds directly near the 3'-end of the 23S rRNA, where it nucleates assembly of the 50S subunit. The chain is Large ribosomal subunit protein uL3 from Bacteroides thetaiotaomicron (strain ATCC 29148 / DSM 2079 / JCM 5827 / CCUG 10774 / NCTC 10582 / VPI-5482 / E50).